A 692-amino-acid chain; its full sequence is Transforming growth factor beta activator LRRC33 (692 aa).

The first 18 residues, 1 to 18 (MELLPLWLCLGFHFLTVG), serve as a signal peptide directing secretion. Residues 19–650 (WRNRSGTATA…CKWERLDLGL (632 aa)) are Extracellular-facing. N-linked (GlcNAc...) asparagine glycosylation occurs at N21. The LRRNT domain maps to 29-56 (ASQGVCKLVGGAADCRGQSLASVPSSLP). LRR repeat units lie at residues 58–79 (HARM…SLQP), 82–103 (LLES…AFQE), 106–127 (HLRS…TAAA), 133–155 (GLRR…MLQN), 158–179 (SLRS…VFEG), 182–203 (RLRE…AFDG), 206–227 (ELRH…GLTR), 228–239 (LRVLNVSYNVLE), 251–272 (ELET…PQYS), and 273–294 (KLRT…YNTS). N-linked (GlcNAc...) asparagine glycosylation occurs at N74. N155 carries N-linked (GlcNAc...) asparagine glycosylation. N-linked (GlcNAc...) asparagine glycosylation is present at N232. Residues N292, N309, and N312 are each glycosylated (N-linked (GlcNAc...) asparagine). LRR repeat units lie at residues 329–350 (DLRF…FLRK), 353–374 (SLSH…EHEP), 377–398 (ALTE…PGLA), 403–424 (SLRL…LFAN), 427–447 (NITT…PAAS), 463–484 (SLRS…PFQG), 486–507 (SLTY…APLQ), 512–534 (MLQV…DFSG), 537–558 (NLRD…GGSL), 559–580 (ALET…AVSE), and 585–594 (GLRTIYLSQN). Residues N408 and N427 are each glycosylated (N-linked (GlcNAc...) asparagine). N-linked (GlcNAc...) asparagine glycosylation occurs at N500. An LRRCT domain is found at 595–643 (PYDCCGVDGWGALQHGQTVADWAMVTCNLSSKIIRVTELPGGVPRDCKW). The N-linked (GlcNAc...) asparagine glycan is linked to N622. The helical transmembrane segment at 651 to 671 (LYLVLILPSCLTLLVACTVIV) threads the bilayer. Topologically, residues 672 to 692 (LTFKKPLLQVIKSRCHWSSVY) are cytoplasmic.

This sequence belongs to the LRRC32/LRRC33 family. Interacts with TGFB1; associates via disulfide bonds with the Latency-associated peptide chain (LAP) regulatory chain of TGFB1, leading to regulate activation of TGF-beta-1. Interacts (via LRR repeats) with TLR2, TLR3, TLR4, TLR9 and probably other Toll-like receptors. Interacts with CYBB/NOX2; the interaction is direct. Mainly expressed in cells of hematopoietic origin. Highly expressed in bone marrow, thymus, liver, lung, intestine and spleen. In the brain, highly expressed in microglia.

It localises to the cell membrane. It is found in the endoplasmic reticulum membrane. Key regulator of transforming growth factor beta-1 (TGFB1) specifically required for microglia function in the nervous system. Required for activation of latent TGF-beta-1 in macrophages and microglia: associates specifically via disulfide bonds with the Latency-associated peptide (LAP), which is the regulatory chain of TGFB1, and regulates integrin-dependent activation of TGF-beta-1. TGF-beta-1 activation mediated by LRRC33/NRROS is highly localized: there is little spreading of TGF-beta-1 activated from one microglial cell to neighboring microglia, suggesting the existence of localized and selective activation of TGF-beta-1 by LRRC33/NRROS. Indirectly plays a role in Toll-like receptor (TLR) signaling: ability to inhibit TLR-mediated NF-kappa-B activation and cytokine production is probably a consequence of its role in TGF-beta-1 signaling. This Homo sapiens (Human) protein is Transforming growth factor beta activator LRRC33.